The primary structure comprises 95 residues: Aspartyl/glutamyl-tRNA(Asn/Gln) amidotransferase subunit C (95 aa).

This sequence belongs to the GatC family. In terms of assembly, heterotrimer of A, B and C subunits.

It catalyses the reaction L-glutamyl-tRNA(Gln) + L-glutamine + ATP + H2O = L-glutaminyl-tRNA(Gln) + L-glutamate + ADP + phosphate + H(+). The enzyme catalyses L-aspartyl-tRNA(Asn) + L-glutamine + ATP + H2O = L-asparaginyl-tRNA(Asn) + L-glutamate + ADP + phosphate + 2 H(+). Functionally, allows the formation of correctly charged Asn-tRNA(Asn) or Gln-tRNA(Gln) through the transamidation of misacylated Asp-tRNA(Asn) or Glu-tRNA(Gln) in organisms which lack either or both of asparaginyl-tRNA or glutaminyl-tRNA synthetases. The reaction takes place in the presence of glutamine and ATP through an activated phospho-Asp-tRNA(Asn) or phospho-Glu-tRNA(Gln). This Geobacter sp. (strain M21) protein is Aspartyl/glutamyl-tRNA(Asn/Gln) amidotransferase subunit C.